Here is an 836-residue protein sequence, read N- to C-terminus: Pentatricopeptide repeat-containing protein At2g39620 (836 aa).

23 PPR repeats span residues 1-35 (MPIN…GLKP), 36-62 (HNQL…VRDP), 63-98 (GVVL…GIDP), 99-133 (DKYS…GLES), 134-164 (DVYI…MHVK), 165-199 (DVVT…CVDI), 200-230 (DHVS…VIKK), 233-263 (IFAF…VWRK), 264-298 (DESS…DVRM), 299-333 (NKVA…GLIG), 334-364 (DVSV…IEDR), 365-399 (DVVS…HIKP), 400-434 (NAVT…DIES), 435-465 (ELET…LPIK), 466-500 (DAVA…GVCP), 501-535 (DSRT…GFDS), 536-566 (ECHV…CGFE), 568-602 (STVS…KFQP), 603-637 (NAVT…GFCS), 638-668 (QTPV…ISNK), 669-703 (YIVS…ELKP), 704-734 (DSVS…MGER), and 740-770 (EVEH…MRVK). The type E motif; degenerate stretch occupies residues 775 to 836 (VWGALLNSSR…KVPACSWIEV (62 aa)).

The protein belongs to the PPR family. PCMP-E subfamily.

This chain is Pentatricopeptide repeat-containing protein At2g39620 (PCMP-E33), found in Arabidopsis thaliana (Mouse-ear cress).